The chain runs to 548 residues: NAD(P)H-quinone oxidoreductase chain 4 (548 aa).

14 helical membrane-spanning segments follow: residues 17 to 37, 48 to 68, 103 to 123, 127 to 147, 149 to 169, 181 to 201, 222 to 242, 256 to 276, 290 to 310, 327 to 347, 348 to 368, 389 to 409, 430 to 450, and 477 to 497; these read VPWLSLSILVPIGGALLIPFI, WYALIVTLITFLITVAAYLTG, LILLTSFITSLACLAAWPVTF, LFFFLLLAMDGGQIAVFAVQD, LLFFLAWELELLPVYLLLAIW, FILYTAGSSLFILLAALAMGF, GFQLLCYAGLLIAFGVKLPIV, TAPVHMLLAGILLKMGGYALL, FAPLLIVLGVVNIIYAALTSF, MGFVLIGIGSFSVLGSSGAML, QMISHGLIGASLFFLVGATYD, FALWTVCALASLALPGMSGFV, VVICGLAAVGVVLTPVYLLSM, and VYIIGCLLVPIIGIGLYPRLM.

It belongs to the complex I subunit 4 family.

Its subcellular location is the cellular thylakoid membrane. It catalyses the reaction a plastoquinone + NADH + (n+1) H(+)(in) = a plastoquinol + NAD(+) + n H(+)(out). It carries out the reaction a plastoquinone + NADPH + (n+1) H(+)(in) = a plastoquinol + NADP(+) + n H(+)(out). In terms of biological role, NDH-1 shuttles electrons from NAD(P)H, via FMN and iron-sulfur (Fe-S) centers, to quinones in the respiratory chain. The immediate electron acceptor for the enzyme in this species is believed to be plastoquinone. Couples the redox reaction to proton translocation (for every two electrons transferred, four hydrogen ions are translocated across the cytoplasmic membrane), and thus conserves the redox energy in a proton gradient. The polypeptide is NAD(P)H-quinone oxidoreductase chain 4 (Synechococcus sp. (strain CC9902)).